Consider the following 239-residue polypeptide: Tetraspanin-9 (239 aa).

Over 1–13 (MARGCLCCLKYMM) the chain is Cytoplasmic. The chain crosses the membrane as a helical span at residues 14-34 (FLFNLIFWLCGCGLLGVGIWL). The Extracellular portion of the chain corresponds to 35–55 (SVSQGNFATFSPSFPSLSAAN). The helical transmembrane segment at 56–76 (LVIVIGTVVMVTGFLGCLGAI) threads the bilayer. Residues 77–85 (KENKCLLLS) lie on the Cytoplasmic side of the membrane. The chain crosses the membrane as a helical span at residues 86–106 (FFIILLIILLTELILLILFFV). The Extracellular portion of the chain corresponds to 107–203 (YMDKVNENAK…VKMWFDDNKH (97 aa)). N-linked (GlcNAc...) asparagine glycosylation is present at asparagine 180. A helical transmembrane segment spans residues 204-224 (VLGTIGMCILIIQILGMAFSM). Residues 225–239 (TLFQQIHRTGKKYDA) lie on the Cytoplasmic side of the membrane.

Belongs to the tetraspanin (TM4SF) family.

The protein localises to the membrane. The protein is Tetraspanin-9 (tspan9) of Xenopus laevis (African clawed frog).